A 244-amino-acid polypeptide reads, in one-letter code: Capsid protein (244 aa).

Positions 1–24 match the Bipartite nuclear localization signal motif; the sequence is MSTSKRKRADEAQWNKRSTKKKGS. Positions 1 to 39 are disordered; that stretch reads MSTSKRKRADEAQWNKRSTKKKGSAPQAKKPGGKVEKPS.

This sequence belongs to the geminiviridae capsid protein family. In terms of assembly, homomultimer. Interacts with the movement protein. Binds to single-stranded and double-stranded viral DNA.

It is found in the virion. Its subcellular location is the host nucleus. Functionally, encapsidates the viral genome into characteristic twinned ('geminate') particles. Binds the genomic viral ssDNA and shuttles it into and out of the cell nucleus. Plays a role in protection of the genome from degradation, virus acquisition and transmission by insect vectors, infectivity, and systemic movement. The CP of monopartite geminiviruses is absolutely essential for virus movement. In Avena sativa (Oat), this protein is Capsid protein.